The chain runs to 384 residues: Probable zinc-binding alcohol dehydrogenase Rv1895 (384 aa).

Zn(2+) is bound by residues cysteine 38, histidine 59, cysteine 89, cysteine 92, cysteine 95, and cysteine 103.

The protein belongs to the zinc-containing alcohol dehydrogenase family. It depends on Zn(2+) as a cofactor.

The enzyme catalyses a primary alcohol + NAD(+) = an aldehyde + NADH + H(+). The catalysed reaction is a secondary alcohol + NAD(+) = a ketone + NADH + H(+). The chain is Probable zinc-binding alcohol dehydrogenase Rv1895 from Mycobacterium tuberculosis (strain ATCC 25618 / H37Rv).